A 1100-amino-acid polypeptide reads, in one-letter code: Formin-like protein 1 (1100 aa).

The span at 1–13 shows a compositional bias: low complexity; that stretch reads MGNAAGSAEQPAG. Disordered stretches follow at residues 1–31, 167–200, 446–474, and 510–635; these read MGNAAGSAEQPAGPAAPPPKQPAPPKQPMPA, STDNGASNSEKNKPLEQSVEDLSKGPPSSVPKSR, RFSESTAMGPSRRPPEPEKAPPAAPTRPS, and TPSG…AKKP. G2 carries the N-myristoyl glycine lipid modification. S7 bears the Phosphoserine mark. Residues 14–28 show a composition bias toward pro residues; that stretch reads PAAPPPKQPAPPKQP. One can recognise a GBD/FH3 domain in the interval 27–468; the sequence is QPMPAAGELE…PPEPEKAPPA (442 aa). S184 carries the phosphoserine modification. Over residues 517-538 the composition is skewed to low complexity; the sequence is PTPGVPTGSPSPDLAPAAEPAP. The segment covering 539–615 has biased composition (pro residues); sequence GAAPPPPPPL…PPPPPPPGGP (77 aa). Residues S624 and S693 each carry the phosphoserine modification. One can recognise an FH2 domain in the interval 632 to 1023; it reads AKKPIQTKFR…QEAGADTPGK (392 aa). The disordered stretch occupies residues 1008–1037; it reads KKEAAAQEAGADTPGKGEPPAPKSPPKARR. Residues 1013–1023 show a composition bias toward low complexity; the sequence is AQEAGADTPGK. Residue S1031 is modified to Phosphoserine. The 32-residue stretch at 1059-1090 folds into the DAD domain; that stretch reads SDRDGAIEDIITVIKTVPFTARTGKRTSRLLC.

This sequence belongs to the formin homology family. Interacts with RAC1, PFN1 and PFN2. Interacts (activated by RAC1) with SRGAP2 (via SH3 domain); regulates the actin filament severing activity of FMNL1. In terms of processing, myristoylation mediates membrane localization and blebbing. As to expression, expressed in heart, brain, placenta, lung, liver, skeletal muscle, kidney and pancreas.

The protein resides in the cytoplasm. The protein localises to the cell membrane. Its subcellular location is the cytoplasmic vesicle. It localises to the phagosome. It is found in the cell cortex. The protein resides in the cell projection. The protein localises to the bleb. May play a role in the control of cell motility and survival of macrophages. Plays a role in the regulation of cell morphology and cytoskeletal organization. Required in the cortical actin filament dynamics and cell shape. The polypeptide is Formin-like protein 1 (FMNL1) (Homo sapiens (Human)).